The following is an 83-amino-acid chain: Small ribosomal subunit protein uS17 (83 aa).

It belongs to the universal ribosomal protein uS17 family. As to quaternary structure, part of the 30S ribosomal subunit.

Functionally, one of the primary rRNA binding proteins, it binds specifically to the 5'-end of 16S ribosomal RNA. The sequence is that of Small ribosomal subunit protein uS17 from Ehrlichia canis (strain Jake).